The sequence spans 459 residues: Cysteine--tRNA ligase (459 aa).

Residue cysteine 28 coordinates Zn(2+). Residues 30-40 (VTIYDLCHIGH) carry the 'HIGH' region motif. Zn(2+) is bound by residues cysteine 209, histidine 234, and glutamate 238. The 'KMSKS' region motif lies at 266–270 (KMSKS). Lysine 269 contributes to the ATP binding site.

Belongs to the class-I aminoacyl-tRNA synthetase family. Monomer. The cofactor is Zn(2+).

Its subcellular location is the cytoplasm. The catalysed reaction is tRNA(Cys) + L-cysteine + ATP = L-cysteinyl-tRNA(Cys) + AMP + diphosphate. The chain is Cysteine--tRNA ligase from Shewanella piezotolerans (strain WP3 / JCM 13877).